The chain runs to 1380 residues: MSLKEGAHTKWGVLKQKLGPQDPEQIEGNMENADPELCIRLLQIPSVVNYSGLKKRLESSDDDWMVQFLELSGLDLLLEALDRLSGRGVARIADALLQLTCINCVRTLMNSHRGIEYIVNNEGYVRKLSQALDTSNVMVKKQVFELLAALCIYSPEGHALSLDALEHYKAVKNQQYRFSVIMNELSTSDNVPYMVTLLSAINAIIFGTEELRKRVQLRNEFIGLQLLDLLTKLRDLEDEDLLIQAIVFEEAKSEDEEELLKIYGGIDMNNHQEVFSTLFNKVSCSPLSVQLLSVLQGLLHLDQSHPSSPLLWEALDILVNRAVLLADDCQNNNVEEVMDRLVTSKKHPSKEKRKPDKCTNQVNKSIQTDKPKDESCEEKTVKKDPVSSGIPADSLQLSDALLALPACVSPLHTPLSGDITSPSHFPSPPSPVVSNAIDRISTSSSLPPPLPPPLPGTELSLPPPPPPPLPGMGGISLTPPPPPPLPGMGGMLPPPPPPLPGMGGMLPPPPPPLPGMGGMLPPPPPPLPGMGGMLPPPPPPLPGMGGMPPPPPPLPGMGGMPPPPPPMFGMGTFTDEVVVARVDYSLGYLPKAYFKVNKPTLKMKKLNWQKLPPNVINDTHSMWASASSSNDTPEPNYSSIEQLFCLPQAVAKEPAAPVKKPPKEISFLDSKKNLNLNIFLKQFKCPNEEVIQLIEKGDRSRFDIEILKQFLKLLPEKHEVENLKSYQEDKAKLSNADQFYLLLLGIPCYQLRIECMLICEEVNLMTDVLRPKAKVVSSACDDIISSHRLPLFCQLILKVGNFLNYGSHTGNANGFKIGTLLKLTETKANQNRITLLHHILEEIEQNHTDLLQLPSDLENVSTAAGINIENMYSETSGNLKKLRDLQNKISTAATDVKDQYEKSIQECMDALKEVEEQLTDITQKKVKLADYLCEDSAKLSLEETFSTMKAFRDLFLKAKKDNKDRKEQAVKAEKRKKQLADEEAKRQKGENGKIIRKGAAKLEEGCIIDALLADIKKGFQLRKTAKTKTEADSCPKPVSSETTGTDGTDVKHVDHVGILPQIKLDSSLNLDGTEQHKSKSKDNCGENFDNKPVVIAPINLDTSACLMNISEQNAKLPVSALQEGANLKQNPDTFVKEQSAIVTTESSTHNNIDGSSVDKCTLGQSQWPSEISDEVDSKYHEMPMQVEHKERAVEGKCSLPKPSVLGTESSSNQNNALNEGSQQHHNNTANESLQQAQNSALSEASQQSCCHTGIKGSPQFQSSALNADSQPSHTSVVGSAQAQRNELDDVALQTRDTTVTEGSQVEEDKCNDEGYPEHKTMGEHPLNSSSHSTTLQQSSEDGQKVKRGSSKHKKKRRSSKHGEEDGVDSPTHKTRGCVVQ.

In terms of domain architecture, GBD/FH3 spans 1-330 (MSLKEGAHTK…RAVLLADDCQ (330 aa)). Disordered stretches follow at residues 341–391 (LVTS…SGIP) and 440–541 (ISTS…PPPL). The span at 343–352 (TSKKHPSKEK) shows a compositional bias: basic residues. A compositionally biased stretch (basic and acidic residues) spans 367-385 (QTDKPKDESCEEKTVKKDP). One can recognise an FH1 domain in the interval 432–592 (VVSNAIDRIS…DYSLGYLPKA (161 aa)). 2 stretches are compositionally biased toward pro residues: residues 446–470 (LPPPLPPPLPGTELSLPPPPPPPLP) and 478–541 (TPPP…PPPL). Positions 593 to 981 (YFKVNKPTLK…AEKRKKQLAD (389 aa)) constitute an FH2 domain. 2 coiled-coil regions span residues 879–930 (LKKL…KLAD) and 956–991 (LKAKKDNKDRKEQAVKAEKRKKQLADEEAKRQKGEN). Positions 1009-1024 (DALLADIKKGFQLRKT) constitute a WH2 domain. Disordered regions lie at residues 1026-1049 (KTKTEADSCPKPVSSETTGTDGTD), 1188-1244 (HKER…LSEA), and 1260-1380 (FQSS…CVVQ). 3 stretches are compositionally biased toward polar residues: residues 1206-1244 (GTESSSNQNNALNEGSQQHHNNTANESLQQAQNSALSEA), 1260-1284 (FQSSALNADSQPSHTSVVGSAQAQR), and 1294-1303 (TRDTTVTEGS). Positions 1306–1322 (EEDKCNDEGYPEHKTMG) are enriched in basic and acidic residues. The segment covering 1328-1339 (SSSHSTTLQQSS) has biased composition (low complexity). The span at 1345–1359 (VKRGSSKHKKKRRSS) shows a compositional bias: basic residues.

This sequence belongs to the formin homology family.

This is Inverted formin-2 (inf2) from Xenopus tropicalis (Western clawed frog).